The sequence spans 362 residues: Chorismate synthase (362 aa).

NADP(+) contacts are provided by arginine 48 and arginine 54. Residues 125-127, 241-242, glycine 286, 301-305, and arginine 327 each bind FMN; these read RSS, NA, and KPTSS.

It belongs to the chorismate synthase family. As to quaternary structure, homotetramer. FMNH2 serves as cofactor.

It catalyses the reaction 5-O-(1-carboxyvinyl)-3-phosphoshikimate = chorismate + phosphate. Its pathway is metabolic intermediate biosynthesis; chorismate biosynthesis; chorismate from D-erythrose 4-phosphate and phosphoenolpyruvate: step 7/7. In terms of biological role, catalyzes the anti-1,4-elimination of the C-3 phosphate and the C-6 proR hydrogen from 5-enolpyruvylshikimate-3-phosphate (EPSP) to yield chorismate, which is the branch point compound that serves as the starting substrate for the three terminal pathways of aromatic amino acid biosynthesis. This reaction introduces a second double bond into the aromatic ring system. This is Chorismate synthase from Paramagnetospirillum magneticum (strain ATCC 700264 / AMB-1) (Magnetospirillum magneticum).